A 190-amino-acid polypeptide reads, in one-letter code: Probable thymidylate kinase (190 aa).

7–14 (GIDGAGKT) provides a ligand contact to ATP.

It belongs to the thymidylate kinase family.

It catalyses the reaction dTMP + ATP = dTDP + ADP. This chain is Probable thymidylate kinase, found in Thermoplasma volcanium (strain ATCC 51530 / DSM 4299 / JCM 9571 / NBRC 15438 / GSS1).